We begin with the raw amino-acid sequence, 448 residues long: uncharacterized protein (448 aa).

Transmembrane regions (helical) follow at residues 14–34 (PFIIGTIAIALFTDLFLYGII), 59–79 (TLLAVYAVANIAASSPIGFLA), 87–107 (VPMLIGLIFLTSATALLTFGN), 120–140 (GLSAAVVWTVGLALLVDVVGA), 148–168 (GGIFGFISLGEIIAPVFGGIV), 171–191 (SLGYYASFGVCFIILLLDIAL), 250–270 (IFGPFWTSFVNSCLFSAFDAT), 288–308 (LMFGVLSTPYFFCGAWAGAMV), 316–333 (IGKRAYAILGCTLFLLCI), 338–358 (TSLNIYLFSAFLAINGVVLAF), 392–412 (FSAYNIVYSLGMIIGPLVAGF), and 417–437 (FNFITSIACLSLLCFSASLMA).

The protein belongs to the major facilitator superfamily. TCR/Tet family.

The protein resides in the endoplasmic reticulum. It is found in the membrane. This is an uncharacterized protein from Schizosaccharomyces pombe (strain 972 / ATCC 24843) (Fission yeast).